The primary structure comprises 200 residues: 3-isopropylmalate dehydratase small subunit (200 aa).

The protein belongs to the LeuD family. LeuD type 1 subfamily. Heterodimer of LeuC and LeuD.

The catalysed reaction is (2R,3S)-3-isopropylmalate = (2S)-2-isopropylmalate. It functions in the pathway amino-acid biosynthesis; L-leucine biosynthesis; L-leucine from 3-methyl-2-oxobutanoate: step 2/4. Its function is as follows. Catalyzes the isomerization between 2-isopropylmalate and 3-isopropylmalate, via the formation of 2-isopropylmaleate. This Haemophilus influenzae (strain PittEE) protein is 3-isopropylmalate dehydratase small subunit.